The sequence spans 189 residues: Interleukin-23 subunit alpha (189 aa).

A signal peptide spans 1–19 (MLGSTAVMLLLLLPWTAQT).

This sequence belongs to the IL-6 superfamily. As to quaternary structure, heterodimer with IL12B; disulfide-linked. The heterodimer is known as interleukin IL-23. Interacts with IL23R; this interaction enables recruitment of IL12RB1.

It is found in the secreted. Associates with IL12B to form the pro-inflammatory cytokine IL-23 that plays different roles in innate and adaptive immunity. Released by antigen-presenting cells such as dendritic cells or macrophages, binds to a heterodimeric receptor complex composed of IL12RB1 and IL23R to activate JAK2 and TYK2 which then phosphorylate the receptor to form a docking site leading to the phosphorylation of STAT3 and STAT4. This process leads to activation of several pathways including p38 MAPK or NF-kappa-B and promotes the production of pro-inflammatory cytokines such as interleukin-17A/IL17A. In turn, participates in the early and effective intracellular bacterial clearance. Promotes the expansion and survival of T-helper 17 cells, a CD4-positive helper T-cell subset that produces IL-17, as well as other IL-17-producing cells. The sequence is that of Interleukin-23 subunit alpha (IL23A) from Cavia porcellus (Guinea pig).